A 255-amino-acid chain; its full sequence is F-box/SPRY domain-containing protein 1 (255 aa).

The F-box domain occupies 3-51; sequence DRVAALCNYNVLEVVFSYLDLNDLGRCSQVCKSWFHFLNDENSDVWRFH. The 193-residue stretch at 61–253 folds into the B30.2/SPRY domain; sequence TKSELLSPVP…VSMVYCGTPL (193 aa).

It belongs to the FBXO45/Fsn family. As to quaternary structure, component of an E3 ubiquitin ligase complex composed of hiw and Fsn.

It localises to the synapse. It functions in the pathway protein modification; protein ubiquitination. Required in the presynaptic motoneuron to down-regulate the levels of wnd and restrain synaptic terminal growth at the neuromuscular junction (NMJ). This Drosophila persimilis (Fruit fly) protein is F-box/SPRY domain-containing protein 1.